The primary structure comprises 264 residues: Ribonuclease H (264 aa).

A disordered region spans residues 55–88 (GSRYSSSSGPYRRSTTSYGYSPYSSSSSNYSARH). The segment covering 56 to 85 (SRYSSSSGPYRRSTTSYGYSPYSSSSSNYS) has biased composition (low complexity). At Ser97 the chain carries Phosphoserine. An RNase H type-1 domain is found at 120-263 (CSDRQVVYAD…ADMLARRGAS (144 aa)). The Mg(2+) site is built by Asp129, Glu171, Asp191, and Asp255.

Belongs to the RNase H family. The cofactor is Mg(2+).

The catalysed reaction is Endonucleolytic cleavage to 5'-phosphomonoester.. In terms of biological role, endonuclease that specifically degrades the RNA of RNA-DNA hybrids. The polypeptide is Ribonuclease H (rnh1) (Schizosaccharomyces pombe (strain 972 / ATCC 24843) (Fission yeast)).